Consider the following 260-residue polypeptide: Triosephosphate isomerase (260 aa).

11–13 (NWK) contacts substrate. His103 acts as the Electrophile in catalysis. Glu175 functions as the Proton acceptor in the catalytic mechanism. Residues Gly181, Ser220, and 241–242 (GG) each bind substrate.

This sequence belongs to the triosephosphate isomerase family. In terms of assembly, homodimer.

The protein localises to the cytoplasm. It carries out the reaction D-glyceraldehyde 3-phosphate = dihydroxyacetone phosphate. It functions in the pathway carbohydrate biosynthesis; gluconeogenesis. The protein operates within carbohydrate degradation; glycolysis; D-glyceraldehyde 3-phosphate from glycerone phosphate: step 1/1. Its function is as follows. Involved in the gluconeogenesis. Catalyzes stereospecifically the conversion of dihydroxyacetone phosphate (DHAP) to D-glyceraldehyde-3-phosphate (G3P). This Shewanella loihica (strain ATCC BAA-1088 / PV-4) protein is Triosephosphate isomerase.